Reading from the N-terminus, the 497-residue chain is Glycerol kinase (497 aa).

Position 11 (Thr11) interacts with ADP. Residues Thr11, Ser12, and Ser13 each coordinate ATP. Residue Thr11 coordinates sn-glycerol 3-phosphate. Residue Arg15 participates in ADP binding. Sn-glycerol 3-phosphate contacts are provided by Arg81, Glu82, Tyr133, and Asp242. Residues Arg81, Glu82, Tyr133, Asp242, and Gln243 each coordinate glycerol. The ADP site is built by Thr264 and Gly307. Thr264, Gly307, Gln311, and Gly412 together coordinate ATP. Residues Gly412 and Asn416 each contribute to the ADP site.

It belongs to the FGGY kinase family.

It catalyses the reaction glycerol + ATP = sn-glycerol 3-phosphate + ADP + H(+). The protein operates within polyol metabolism; glycerol degradation via glycerol kinase pathway; sn-glycerol 3-phosphate from glycerol: step 1/1. Its activity is regulated as follows. Inhibited by fructose 1,6-bisphosphate (FBP). Key enzyme in the regulation of glycerol uptake and metabolism. Catalyzes the phosphorylation of glycerol to yield sn-glycerol 3-phosphate. In Polaromonas naphthalenivorans (strain CJ2), this protein is Glycerol kinase.